The following is a 231-amino-acid chain: Probable septum site-determining protein MinC (231 aa).

This sequence belongs to the MinC family. Interacts with MinD and FtsZ.

Its function is as follows. Cell division inhibitor that blocks the formation of polar Z ring septums. Rapidly oscillates between the poles of the cell to destabilize FtsZ filaments that have formed before they mature into polar Z rings. Prevents FtsZ polymerization. This is Probable septum site-determining protein MinC from Baumannia cicadellinicola subsp. Homalodisca coagulata.